The sequence spans 207 residues: Ribosomal RNA large subunit methyltransferase E (207 aa).

Residues glycine 56, tryptophan 58, aspartate 76, aspartate 94, and aspartate 116 each contribute to the S-adenosyl-L-methionine site. The active-site Proton acceptor is the lysine 156.

It belongs to the class I-like SAM-binding methyltransferase superfamily. RNA methyltransferase RlmE family.

Its subcellular location is the cytoplasm. The catalysed reaction is uridine(2552) in 23S rRNA + S-adenosyl-L-methionine = 2'-O-methyluridine(2552) in 23S rRNA + S-adenosyl-L-homocysteine + H(+). Its function is as follows. Specifically methylates the uridine in position 2552 of 23S rRNA at the 2'-O position of the ribose in the fully assembled 50S ribosomal subunit. This is Ribosomal RNA large subunit methyltransferase E from Desulfatibacillum aliphaticivorans.